Reading from the N-terminus, the 120-residue chain is Glycine cleavage system H protein (120 aa).

In terms of domain architecture, Lipoyl-binding spans 17-99 (IATVGITAHA…RGAGWFFKLK (83 aa)). Residue Lys58 is modified to N6-lipoyllysine.

This sequence belongs to the GcvH family. The glycine cleavage system is composed of four proteins: P, T, L and H. The cofactor is (R)-lipoate.

In terms of biological role, the glycine cleavage system catalyzes the degradation of glycine. The H protein shuttles the methylamine group of glycine from the P protein to the T protein. This chain is Glycine cleavage system H protein, found in Allorhizobium ampelinum (strain ATCC BAA-846 / DSM 112012 / S4) (Agrobacterium vitis (strain S4)).